The chain runs to 696 residues: Transcriptional regulatory protein pro1 (696 aa).

Positions 1–48 (MSTQSPNHHEDITKTSSVNMTTTTTTTKTKAAAKAGTNAAPKQKTQMH) are disordered. A compositionally biased stretch (low complexity) spans 21 to 40 (TTTTTTTKTKAAAKAGTNAA). Residues 55-82 (CYTCRLRRKKCDEGSPMCTACKHLGLCC) constitute a DNA-binding region (zn(2)-C6 fungal-type). Residues 112–145 (LSEKSSHTIQTSINTPPGLSHSLPTSATFSDPLD) form a disordered region. The span at 118–140 (HTIQTSINTPPGLSHSLPTSATF) shows a compositional bias: polar residues.

The protein localises to the nucleus. May be involved in fruiting body development. This is Transcriptional regulatory protein pro1 (adv-1) from Neurospora crassa (strain ATCC 24698 / 74-OR23-1A / CBS 708.71 / DSM 1257 / FGSC 987).